The sequence spans 3661 residues: Serine/threonine-protein kinase SMG1 (3661 aa).

Low complexity predominate over residues 1–11 (MSRRAPGSRLS). 2 disordered regions span residues 1–101 (MSRR…TYGR) and 116–144 (PEFT…MSYS). Residues 1-1977 (MSRRAPGSRL…GVLLQQHMYV (1977 aa)) form an interaction with SMG8 and SMG9 region. Residues 26-35 (NDWQPRTDSA) are compositionally biased toward polar residues. 2 stretches are compositionally biased toward basic and acidic residues: residues 69 to 86 (QRHD…DEKG) and 129 to 138 (ATKDMRKSQE). At K173 the chain carries N6-acetyllysine. Residues 1154–1165 (RNSASPKHSLNG) are compositionally biased toward polar residues. A disordered region spans residues 1154–1175 (RNSASPKHSLNGESRKTVLSKP). Residues 1283-1866 (RELQKSIEVQ…LYPAIVGTIS (584 aa)) form the FAT domain. An HEAT repeat occupies 1817-1852 (APWRGIIPQLFSRLNHPEVYVRQSICNLLCRVAQDS). Positions 1898–1919 (ECEGGSPPASQDSNKDEPKSGL) are disordered. The 340-residue stretch at 2124–2463 (VGGTITILPT…MEREITRSLF (340 aa)) folds into the PI3K/PI4K catalytic domain. The segment at 2130 to 2136 (ILPTKTK) is G-loop. The tract at residues 2332–2340 (GLGDRHLDN) is catalytic loop. The activation loop stretch occupies residues 2352–2376 (HIDYNVCFEKGKSLRVPEKVPFRMT). A Phosphothreonine modification is found at T3550. 2 positions are modified to phosphoserine: S3556 and S3570. The segment covering 3568–3579 (ATSADTPPSTVP) has biased composition (polar residues). A disordered region spans residues 3568–3591 (ATSADTPPSTVPGTGKSVACSPKK). A phosphothreonine mark is found at T3573 and T3577. One can recognise an FATC domain in the interval 3629–3661 (RRMSVAEQVDYVIKEATNLDNLAQLYEGWTAWV).

Belongs to the PI3/PI4-kinase family. In terms of assembly, component of the SMG1C complex composed of SMG1, SMG8 and SMG9; the recruitment of SMG8 to SMG1 N-terminus induces a large conformational change in the SMG1 C-terminal head domain containing the catalytic domain. Component of the transient SURF (SMG1-UPF1-eRF1-eRF3) complex. Part of a complex composed of SMG1, DHX34 and UPF1; within the complex DHX34 acts as a scaffolding protein to facilitate SMG1 phosphorylation of UPF1. Interacts with PRKCI. Interacts with TELO2 and TTI1. Interacts with RUVBL1 and RUVBL2. Interacts with UPF2. Interacts with DHX34 (via C-terminus); the interaction is RNA-independent. Mn(2+) serves as cofactor. In terms of processing, autophosphorylated. Widely expressed, with highest level in heart and skeletal muscle. Expressed in placenta, brain, lung and spleen, but not in liver.

The protein localises to the nucleus. The protein resides in the cytoplasm. The catalysed reaction is L-seryl-[protein] + ATP = O-phospho-L-seryl-[protein] + ADP + H(+). It catalyses the reaction L-threonyl-[protein] + ATP = O-phospho-L-threonyl-[protein] + ADP + H(+). Inhibited by caffeine, LY294002 and wortmannin. Its function is as follows. Serine/threonine protein kinase involved in both mRNA surveillance and genotoxic stress response pathways. Recognizes the substrate consensus sequence [ST]-Q. Plays a central role in nonsense-mediated decay (NMD) of mRNAs containing premature stop codons by phosphorylating UPF1/RENT1. Recruited by release factors to stalled ribosomes together with SMG8 and SMG9 (forming the SMG1C protein kinase complex), and UPF1 to form the transient SURF (SMG1-UPF1-eRF1-eRF3) complex. In EJC-dependent NMD, the SURF complex associates with the exon junction complex (EJC) through UPF2 and allows the formation of an UPF1-UPF2-UPF3 surveillance complex which is believed to activate NMD. Also acts as a genotoxic stress-activated protein kinase that displays some functional overlap with ATM. Can phosphorylate p53/TP53 and is required for optimal p53/TP53 activation after cellular exposure to genotoxic stress. Its depletion leads to spontaneous DNA damage and increased sensitivity to ionizing radiation (IR). May activate PRKCI but not PRKCZ. The protein is Serine/threonine-protein kinase SMG1 of Homo sapiens (Human).